The chain runs to 35 residues: Mu-theraphotoxin-Ca2a (35 aa).

Cystine bridges form between C2–C17, C9–C24, and C16–C31.

Belongs to the neurotoxin 10 (Hwtx-1) family. 10 (haplotoxin-1) subfamily. Expressed by the venom gland.

Its subcellular location is the secreted. In terms of biological role, potently inhibits Nav1.7/SCN9A (IC(50)=98.1 nM), and moderately inhibits Nav1.2/SCN2A (IC(50)=216.3 nM), Nav1.6/SCN8A (IC(50)=313.6 nM), and Nav1.3/SCN3A (IC(50)=491.3 nM). Hyperpolarizes the slow inactivation, but does not alter the voltage-dependent activation or fast inactivation of Nav1.7/SCN9A. Binds with Nav1.7/SCN9A at the extracellular S3-S4 linker of domain II (site 4). In vivo, exhibits dose-dependent analgesic efficacy by reducing pain responses in rodent models of formalin-induced paw licking, hot plate test, and acetic acid-induced writhing. In Cyriopagopus albostriatus (Cambodian tiger tarantula), this protein is Mu-theraphotoxin-Ca2a.